Here is a 373-residue protein sequence, read N- to C-terminus: Indole glucosinolate O-methyltransferase 4 (373 aa).

Residues glycine 217, aspartate 240, aspartate 260, methionine 261, and lysine 274 each contribute to the S-adenosyl-L-homocysteine site. Catalysis depends on histidine 278, which acts as the Proton acceptor.

This sequence belongs to the class I-like SAM-binding methyltransferase superfamily. Cation-independent O-methyltransferase family. In terms of assembly, interacts with B'GAMMA.

It functions in the pathway secondary metabolite biosynthesis. Functionally, involved in indole glucosinolate biosynthesis. Catalyzes methoxylation reactions of the glucosinolate indole ring. Converts the hydroxy intermediates 4-hydroxy-indol-3-yl-methylglucosinolate (4OH-I3M) and 1-hydroxy-indol-3-yl-methylglucosinolate (1OH-I3M) to 4-methoxy-indol-3-yl-methylglucosinolate (4MO-I3M) and 1-methoxy-indol-3-yl-methylglucosinolate(1MO-I3M), respectively. This Arabidopsis thaliana (Mouse-ear cress) protein is Indole glucosinolate O-methyltransferase 4.